Here is a 236-residue protein sequence, read N- to C-terminus: Ubiquinone biosynthesis O-methyltransferase (236 aa).

Positions 39, 59, 80, and 124 each coordinate S-adenosyl-L-methionine.

The protein belongs to the methyltransferase superfamily. UbiG/COQ3 family.

The enzyme catalyses a 3-demethylubiquinol + S-adenosyl-L-methionine = a ubiquinol + S-adenosyl-L-homocysteine + H(+). It catalyses the reaction a 3-(all-trans-polyprenyl)benzene-1,2-diol + S-adenosyl-L-methionine = a 2-methoxy-6-(all-trans-polyprenyl)phenol + S-adenosyl-L-homocysteine + H(+). The protein operates within cofactor biosynthesis; ubiquinone biosynthesis. Functionally, O-methyltransferase that catalyzes the 2 O-methylation steps in the ubiquinone biosynthetic pathway. This Shewanella sp. (strain W3-18-1) protein is Ubiquinone biosynthesis O-methyltransferase.